Reading from the N-terminus, the 332-residue chain is Torsin-1A (332 aa).

An N-terminal signal peptide occupies residues 1–20 (MKLGRAVLGLLLLAPSVVQA). Positions 91 to 251 (KPKKPLTLSL…VSVFNNKNSG (161 aa)) are interaction with SNAPIN. 102-109 (GWTGTGKN) is an ATP binding site. 2 N-linked (GlcNAc...) (high mannose) asparagine glycosylation sites follow: N143 and N158. The segment at 251-332 (GFWHSSLIDR…FTKLDYYYDD (82 aa)) is interaction with KLC1. An interaction with SYNE3 region spans residues 312-332 (RVFSDKGCKTVFTKLDYYYDD).

Belongs to the ClpA/ClpB family. Torsin subfamily. In terms of assembly, homohexamer. Interacts with TOR1B; the interaction may be specific of neural tissues. Interacts (ATP-bound) with TOR1AIP1 and TOR1AIP2; the interactions induce ATPase activity. Interacts with KLHL14; preferentially when ATP-free. Interacts with KLC1 (via TPR repeats); the interaction associates TOR1A with the kinesin oligomeric complex. Interacts with COPS4; the interaction associates TOR1A with the CSN complex. Interacts with SNAPIN; the interaction is direct and associates SNAPIN with the CSN complex. Interacts with STON2. Interacts (ATP-bound) with SYNE3 (via KASH domain); the interaction is required for SYNE3 nuclear envelope localization. Interacts with VIM; the interaction associates TOR1A with the cytoskeleton. Interacts with PLEC. Interacts (ATP-bound) with SLC6A3; regulates SLC6A3 transport to the plasma membrane. N-glycosylated. In terms of tissue distribution, widely expressed. Highest levels in kidney and liver. In the brain, high levels found in the dopaminergic neurons of the substantia nigra pars compacta, as well as in the neocortex, hippocampus and cerebellum. Also highly expressed in the spinal cord.

It is found in the endoplasmic reticulum lumen. The protein resides in the nucleus membrane. It localises to the cell projection. The protein localises to the growth cone. Its subcellular location is the cytoplasmic vesicle membrane. It is found in the cytoplasmic vesicle. The protein resides in the secretory vesicle. It localises to the synaptic vesicle. The protein localises to the cytoplasm. Its subcellular location is the cytoskeleton. It catalyses the reaction ATP + H2O = ADP + phosphate + H(+). Its function is as follows. Protein with chaperone functions important for the control of protein folding, processing, stability and localization as well as for the reduction of misfolded protein aggregates. Involved in the regulation of synaptic vesicle recycling, controls STON2 protein stability in collaboration with the COP9 signalosome complex (CSN). In the nucleus, may link the cytoskeleton with the nuclear envelope, this mechanism seems to be crucial for the control of nuclear polarity, cell movement and, specifically in neurons, nuclear envelope integrity. Participates in the cellular trafficking and may regulate the subcellular location of multipass membrane proteins such as the dopamine transporter SLC6A3, leading to the modulation of dopamine neurotransmission. In the endoplasmic reticulum, plays a role in the quality control of protein folding by increasing clearance of misfolded proteins such as SGCE variants or holding them in an intermediate state for proper refolding. May have a redundant function with TOR1B in non-neural tissues. This is Torsin-1A (TOR1A) from Homo sapiens (Human).